Here is a 239-residue protein sequence, read N- to C-terminus: Large ribosomal subunit protein uL2 (239 aa).

Residues 200-239 are disordered; sequence VNHPHGGKEHHIGRPSTVSRRAPPGRKVGHIAARRTGRRK. The span at 222-239 shows a compositional bias: basic residues; it reads PPGRKVGHIAARRTGRRK.

Belongs to the universal ribosomal protein uL2 family. Part of the 50S ribosomal subunit. Forms a bridge to the 30S subunit in the 70S ribosome.

Functionally, one of the primary rRNA binding proteins. Required for association of the 30S and 50S subunits to form the 70S ribosome, for tRNA binding and peptide bond formation. It has been suggested to have peptidyltransferase activity; this is somewhat controversial. Makes several contacts with the 16S rRNA in the 70S ribosome. The protein is Large ribosomal subunit protein uL2 of Thermococcus onnurineus (strain NA1).